The chain runs to 503 residues: Lanosterol 14-alpha demethylase (503 aa).

The helical transmembrane segment at 24 to 44 threads the bilayer; the sequence is GNLLSTLLIACAFTLSLVYLF. C449 is a heme binding site.

This sequence belongs to the cytochrome P450 family. Heme is required as a cofactor. Ubiquitinated by MARCHF6, leading to proteasomal degradation.

Its subcellular location is the endoplasmic reticulum membrane. The protein localises to the microsome membrane. The enzyme catalyses a 14alpha-methyl steroid + 3 reduced [NADPH--hemoprotein reductase] + 3 O2 = a Delta(14) steroid + formate + 3 oxidized [NADPH--hemoprotein reductase] + 4 H2O + 4 H(+). It carries out the reaction lanosterol + 3 reduced [NADPH--hemoprotein reductase] + 3 O2 = 4,4-dimethyl-5alpha-cholesta-8,14,24-trien-3beta-ol + formate + 3 oxidized [NADPH--hemoprotein reductase] + 4 H2O + 4 H(+). The catalysed reaction is 24,25-dihydrolanosterol + 3 reduced [NADPH--hemoprotein reductase] + 3 O2 = 4,4-dimethyl-8,14-cholestadien-3beta-ol + formate + 3 oxidized [NADPH--hemoprotein reductase] + 4 H2O + 4 H(+). It catalyses the reaction a 14alpha-methyl steroid + reduced [NADPH--hemoprotein reductase] + O2 = a 14alpha-hydroxymethyl steroid + oxidized [NADPH--hemoprotein reductase] + H2O + H(+). The enzyme catalyses a 14alpha-hydroxymethyl steroid + reduced [NADPH--hemoprotein reductase] + O2 = a 14alpha-formyl steroid + oxidized [NADPH--hemoprotein reductase] + 2 H2O + H(+). It carries out the reaction a 14alpha-formyl steroid + reduced [NADPH--hemoprotein reductase] + O2 = a Delta(14) steroid + formate + oxidized [NADPH--hemoprotein reductase] + H2O + 2 H(+). The catalysed reaction is lanosterol + reduced [NADPH--hemoprotein reductase] + O2 = 32-hydroxylanosterol + oxidized [NADPH--hemoprotein reductase] + H2O + H(+). It catalyses the reaction 32-hydroxylanosterol + reduced [NADPH--hemoprotein reductase] + O2 = 32-oxolanosterol + oxidized [NADPH--hemoprotein reductase] + 2 H2O + H(+). The enzyme catalyses 32-oxolanosterol + reduced [NADPH--hemoprotein reductase] + O2 = 4,4-dimethyl-5alpha-cholesta-8,14,24-trien-3beta-ol + formate + oxidized [NADPH--hemoprotein reductase] + H2O + 2 H(+). It carries out the reaction 24,25-dihydrolanosterol + reduced [NADPH--hemoprotein reductase] + O2 = 32-hydroxy-24,25-dihydrolanosterol + oxidized [NADPH--hemoprotein reductase] + H2O + H(+). The catalysed reaction is 32-hydroxy-24,25-dihydrolanosterol + reduced [NADPH--hemoprotein reductase] + O2 = 32-oxo-24,25-dihydrolanosterol + oxidized [NADPH--hemoprotein reductase] + 2 H2O + H(+). It catalyses the reaction 32-oxo-24,25-dihydrolanosterol + reduced [NADPH--hemoprotein reductase] + O2 = 4,4-dimethyl-8,14-cholestadien-3beta-ol + formate + oxidized [NADPH--hemoprotein reductase] + H2O + 2 H(+). Its pathway is steroid biosynthesis; zymosterol biosynthesis; zymosterol from lanosterol: step 1/6. Inhibited by azalanstat. Inhibited by azole antifungal agents ketoconazole, itraconazole and fluconazole. Sterol 14alpha-demethylase that plays a critical role in the cholesterol biosynthesis pathway, being cholesterol the major sterol component in mammalian membranes as well as a precursor for bile acid and steroid hormone synthesis. Cytochrome P450 monooxygenase that catalyzes the three-step oxidative removal of the 14alpha-methyl group (C-32) of sterols such as lanosterol (lanosta-8,24-dien-3beta-ol) and 24,25-dihydrolanosterol (DHL) in the form of formate, and converts the sterols to 4,4-dimethyl-5alpha-cholesta-8,14,24-trien-3beta-ol and 4,4-dimethyl-8,14-cholestadien-3beta-ol, respectively, which are intermediates of cholesterol biosynthesis. Can also demethylate substrates not intrinsic to mammals, such as eburicol (24-methylene-24,25-dihydrolanosterol), but at a lower rate than DHL. The chain is Lanosterol 14-alpha demethylase from Mus musculus (Mouse).